The following is a 392-amino-acid chain: Succinyl-diaminopimelate desuccinylase (392 aa).

A Zn(2+)-binding site is contributed by His-78. The active site involves Asp-80. Asp-110 contributes to the Zn(2+) binding site. Residue Glu-145 is the Proton acceptor of the active site. Residues Glu-146, Glu-174, and His-363 each coordinate Zn(2+).

Belongs to the peptidase M20A family. DapE subfamily. In terms of assembly, homodimer. Zn(2+) serves as cofactor. It depends on Co(2+) as a cofactor.

The catalysed reaction is N-succinyl-(2S,6S)-2,6-diaminopimelate + H2O = (2S,6S)-2,6-diaminopimelate + succinate. The protein operates within amino-acid biosynthesis; L-lysine biosynthesis via DAP pathway; LL-2,6-diaminopimelate from (S)-tetrahydrodipicolinate (succinylase route): step 3/3. Catalyzes the hydrolysis of N-succinyl-L,L-diaminopimelic acid (SDAP), forming succinate and LL-2,6-diaminopimelate (DAP), an intermediate involved in the bacterial biosynthesis of lysine and meso-diaminopimelic acid, an essential component of bacterial cell walls. In Methylobacterium radiotolerans (strain ATCC 27329 / DSM 1819 / JCM 2831 / NBRC 15690 / NCIMB 10815 / 0-1), this protein is Succinyl-diaminopimelate desuccinylase.